Consider the following 95-residue polypeptide: Progonadoliberin-1 (95 aa).

The first 25 residues, 1–25 (MAPQTSNLWILLLLVVVMMMSQGCC), serve as a signal peptide directing secretion. Gln26 is subject to Pyrrolidone carboxylic acid. Gly35 is modified (glycine amide).

This sequence belongs to the GnRH family.

The protein resides in the secreted. Stimulates the secretion of gonadotropins. This Sparus aurata (Gilthead sea bream) protein is Progonadoliberin-1 (gnrh1).